The following is a 318-amino-acid chain: Ribosomal RNA small subunit methyltransferase H (318 aa).

S-adenosyl-L-methionine-binding positions include G34 to H36, D57, L91, D110, and Q117.

Belongs to the methyltransferase superfamily. RsmH family.

It localises to the cytoplasm. It catalyses the reaction cytidine(1402) in 16S rRNA + S-adenosyl-L-methionine = N(4)-methylcytidine(1402) in 16S rRNA + S-adenosyl-L-homocysteine + H(+). Its function is as follows. Specifically methylates the N4 position of cytidine in position 1402 (C1402) of 16S rRNA. The polypeptide is Ribosomal RNA small subunit methyltransferase H (Chlorobaculum parvum (strain DSM 263 / NCIMB 8327) (Chlorobium vibrioforme subsp. thiosulfatophilum)).